Consider the following 172-residue polypeptide: Transcriptional repressor NrdR (172 aa).

The segment at 3–34 (CPFCSYSDNRVLESRLAEEGESVRRRRECKQC) is a zinc-finger region. In terms of domain architecture, ATP-cone spans 49-139 (TVVIKRNGRR…VYRKFKGVAD (91 aa)).

Belongs to the NrdR family. Zn(2+) is required as a cofactor.

Negatively regulates transcription of bacterial ribonucleotide reductase nrd genes and operons by binding to NrdR-boxes. This is Transcriptional repressor NrdR from Gloeobacter violaceus (strain ATCC 29082 / PCC 7421).